The sequence spans 466 residues: tRNA modification GTPase MnmE (466 aa).

(6S)-5-formyl-5,6,7,8-tetrahydrofolate contacts are provided by R25, E82, and K127. Residues 223–388 (GIKVVIAGQP…LRRQLLQIAG (166 aa)) enclose the TrmE-type G domain. Position 233 (N233) interacts with K(+). GTP is bound by residues 233–238 (NAGKSS), 252–258 (TPIAGTT), 277–280 (DTAG), 346–349 (NKAD), and 369–371 (SAR). Position 237 (S237) interacts with Mg(2+). 3 residues coordinate K(+): T252, I254, and T257. A Mg(2+)-binding site is contributed by T258. K466 serves as a coordination point for (6S)-5-formyl-5,6,7,8-tetrahydrofolate.

It belongs to the TRAFAC class TrmE-Era-EngA-EngB-Septin-like GTPase superfamily. TrmE GTPase family. As to quaternary structure, homodimer. Heterotetramer of two MnmE and two MnmG subunits. It depends on K(+) as a cofactor.

It is found in the cytoplasm. Functionally, exhibits a very high intrinsic GTPase hydrolysis rate. Involved in the addition of a carboxymethylaminomethyl (cmnm) group at the wobble position (U34) of certain tRNAs, forming tRNA-cmnm(5)s(2)U34. This chain is tRNA modification GTPase MnmE, found in Acidovorax sp. (strain JS42).